The primary structure comprises 528 residues: Probable rhamnogalacturonate lyase A (528 aa).

The first 20 residues, 1–20 (MLSKATLLLSLPFWARVANA), serve as a signal peptide directing secretion. Asn46 carries N-linked (GlcNAc...) asparagine glycosylation. 2 disulfide bridges follow: Cys50–Cys93 and Cys184–Cys193. Asn351 is a glycosylation site (N-linked (GlcNAc...) asparagine).

This sequence belongs to the polysaccharide lyase 4 family.

The protein localises to the secreted. It catalyses the reaction Endotype eliminative cleavage of L-alpha-rhamnopyranosyl-(1-&gt;4)-alpha-D-galactopyranosyluronic acid bonds of rhamnogalacturonan I domains in ramified hairy regions of pectin leaving L-rhamnopyranose at the reducing end and 4-deoxy-4,5-unsaturated D-galactopyranosyluronic acid at the non-reducing end.. Its function is as follows. Pectinolytic enzymes consist of four classes of enzymes: pectin lyase, polygalacturonase, pectin methylesterase and rhamnogalacturonase. Degrades the rhamnogalacturonan I (RG-I) backbone of pectin. This is Probable rhamnogalacturonate lyase A (rglA) from Neosartorya fischeri (strain ATCC 1020 / DSM 3700 / CBS 544.65 / FGSC A1164 / JCM 1740 / NRRL 181 / WB 181) (Aspergillus fischerianus).